We begin with the raw amino-acid sequence, 311 residues long: MSFAHRHLLGIEQLSPADITAILDLAETYVALNRQSAKHSDVLSGLTQINMFFENSTRTQASFELAGKRLGADVMNMSMQASSIKKGETLIDTAMTLNAMHPDLLVVRHPHSGAVDLLAQKVNCAVLNAGDGRHEHPTQALLDALTIRRAKGRLHRLNIAICGDIAHSRVARSNLILLGKMENRIRLIGPPTLVPAQFAEFGAEVYDDMREGLKDVDVVMMLRLQRERMDGGFIPSEREYYHRYGLDREKLGLAKPDAIVMHPGPMNRGVEIDGTLADDINRSVIQEQVEMGVAVRMAAMELLARNLREAT.

R58 and T59 together coordinate carbamoyl phosphate. K86 is a binding site for L-aspartate. Residues R108, H136, and Q139 each coordinate carbamoyl phosphate. L-aspartate is bound by residues R169 and R223. G264 and P265 together coordinate carbamoyl phosphate.

The protein belongs to the aspartate/ornithine carbamoyltransferase superfamily. ATCase family. Heterododecamer (2C3:3R2) of six catalytic PyrB chains organized as two trimers (C3), and six regulatory PyrI chains organized as three dimers (R2).

It carries out the reaction carbamoyl phosphate + L-aspartate = N-carbamoyl-L-aspartate + phosphate + H(+). It functions in the pathway pyrimidine metabolism; UMP biosynthesis via de novo pathway; (S)-dihydroorotate from bicarbonate: step 2/3. Its function is as follows. Catalyzes the condensation of carbamoyl phosphate and aspartate to form carbamoyl aspartate and inorganic phosphate, the committed step in the de novo pyrimidine nucleotide biosynthesis pathway. This Ruegeria pomeroyi (strain ATCC 700808 / DSM 15171 / DSS-3) (Silicibacter pomeroyi) protein is Aspartate carbamoyltransferase catalytic subunit.